The chain runs to 1663 residues: Cortactin-binding protein 2 (1663 aa).

Disordered regions lie at residues 1-23 (MATD…AGAA), 203-222 (KKKT…RSTE), 359-440 (QASH…LHPG), 454-478 (GNAN…SPTS), and 498-617 (RFTS…KPSI). A coiled-coil region spans residues 119-276 (KKMQERMSAQ…EQLKRGSDSK (158 aa)). The segment covering 386–396 (PSTGSTPDPTS) has biased composition (low complexity). R498 carries the asymmetric dimethylarginine modification. The segment covering 583-593 (TVASPPSSLPQ) has biased composition (polar residues). ANK repeat units follow at residues 709–739 (GRPT…DINY), 743–772 (DGHS…QVNA), 776–805 (NGFT…NINH), 809–838 (GGQT…NRSV), 842–871 (DGWT…PARG), and 912–942 (EGWT…EPER). The segment at 1446–1485 (NKKKGESGAWRKVNTSPRRKSGRFSLPTWNKPDLSTEGMK) is disordered. A Phosphoserine modification is found at S1524. The interval 1580–1663 (SQKEVSPLSS…KNEHLEKPNK (84 aa)) is disordered. Residues 1582–1599 (KEVSPLSSHQTTECSNSK) show a composition bias toward polar residues. The segment covering 1624–1638 (SQNTKRSSSSSNTRQ) has biased composition (low complexity). The segment covering 1645 to 1663 (SKEENWNLHKNEHLEKPNK) has biased composition (basic and acidic residues).

Interacts with CTTN/cortactin SH3 domain. Interacts with STRN, STRN4/zinedin and MOB4/phocein; this interactions mediate the association with the STRIPAK core complex and may regulate dendritic spine distribution of the STRIPAK complex in hippocampal neurons. Activation of glutamate receptors weakens the interaction with STRN and STRN4.

The protein localises to the cytoplasm. The protein resides in the cell cortex. Its subcellular location is the cell projection. It is found in the dendritic spine. Functionally, regulates the dendritic spine distribution of CTTN/cortactin in hippocampal neurons, and thus controls dendritic spinogenesis and dendritic spine maintenance. Associates with the striatin-interacting phosphatase and kinase (STRIPAK) core complex to regulate dendritic spine distribution of the STRIPAK complex in hippocampal neurons. In Pongo abelii (Sumatran orangutan), this protein is Cortactin-binding protein 2 (CTTNBP2).